Reading from the N-terminus, the 542-residue chain is Putative selenium-binding protein (542 aa).

This sequence belongs to the selenium-binding protein family.

This chain is Putative selenium-binding protein, found in Caenorhabditis elegans.